Consider the following 221-residue polypeptide: Putative N-acetylmannosamine-6-phosphate 2-epimerase (221 aa).

Belongs to the NanE family.

The enzyme catalyses an N-acyl-D-glucosamine 6-phosphate = an N-acyl-D-mannosamine 6-phosphate. Its pathway is amino-sugar metabolism; N-acetylneuraminate degradation; D-fructose 6-phosphate from N-acetylneuraminate: step 3/5. Converts N-acetylmannosamine-6-phosphate (ManNAc-6-P) to N-acetylglucosamine-6-phosphate (GlcNAc-6-P). This Clostridium perfringens (strain SM101 / Type A) protein is Putative N-acetylmannosamine-6-phosphate 2-epimerase.